Here is a 273-residue protein sequence, read N- to C-terminus: SPRY domain-containing SOCS box protein 1 (273 aa).

The residue at position 31 (tyrosine 31) is a Phosphotyrosine. One can recognise a B30.2/SPRY domain in the interval 33–231; that stretch reads KPTRLDLLLD…IRMRYLNGLD (199 aa). Residues 232 to 273 form the SOCS box domain; that stretch reads PEPLPLMDLCRRSVRLALGKGRLGEIHALPLPASLKAYLLYQ.

This sequence belongs to the SPSB family. As to quaternary structure, component of the probable ECS(SPSB1) E3 ubiquitin-protein ligase complex which contains CUL5, RNF7/RBX2, Elongin BC complex and SPSB1. Interacts with CUL5, RNF7, ELOB and ELOC. Directly interacts with MET tyrosine kinase domain in the presence and in the absence of HGF, however HGF treatment has a positive effect on this interaction. When phosphorylated, interacts with RASA1 without affecting its stability. Interacts (via B30.2/SPRY domain) with PAWR; this interaction is direct and occurs in association with the Elongin BC complex. Interacts with NOS2 and EPHB2.

The protein localises to the cytoplasm. It localises to the cytosol. Its pathway is protein modification; protein ubiquitination. Its function is as follows. Substrate recognition component of a SCF-like ECS (Elongin BC-CUL2/5-SOCS-box protein) E3 ubiquitin-protein ligase complex which mediates the ubiquitination and subsequent proteasomal degradation of target proteins. Negatively regulates nitric oxide (NO) production and limits cellular toxicity in activated macrophages by mediating the ubiquitination and proteasomal degradation of NOS2. Acts as a bridge which links NOS2 with the ECS E3 ubiquitin ligase complex components ELOC and CUL5. This chain is SPRY domain-containing SOCS box protein 1 (SPSB1), found in Bos taurus (Bovine).